An 884-amino-acid chain; its full sequence is Coatomer subunit gamma-1 (884 aa).

HEAT repeat units follow at residues 65–100 (VEAT…SPSS), 101–138 (DEVI…GTLL), 286–323 (RELA…TRPL), 325–357 (VTNC…TGNE), and 358–395 (SSVD…KFPL). Residues 592 to 612 (QPLQEKKAPGKKPPAGAPAPA) form a disordered region. The span at 602-612 (KKPPAGAPAPA) shows a compositional bias: pro residues.

It belongs to the COPG family. In terms of assembly, oligomeric complex that consists of at least the alpha, beta, beta', gamma, delta, epsilon and zeta subunits.

The protein resides in the cytoplasm. The protein localises to the golgi apparatus membrane. Its subcellular location is the cytoplasmic vesicle. It is found in the COPI-coated vesicle membrane. The coatomer is a cytosolic protein complex that binds to dilysine motifs and reversibly associates with Golgi non-clathrin-coated vesicles, which further mediate biosynthetic protein transport from the ER, via the Golgi up to the trans Golgi network. Coatomer complex is required for budding from Golgi membranes, and is essential for the retrograde Golgi-to-ER transport of dilysine-tagged proteins. This chain is Coatomer subunit gamma-1, found in Oryza sativa subsp. japonica (Rice).